We begin with the raw amino-acid sequence, 139 residues long: ATP synthase epsilon chain (139 aa).

It belongs to the ATPase epsilon chain family. As to quaternary structure, F-type ATPases have 2 components, CF(1) - the catalytic core - and CF(0) - the membrane proton channel. CF(1) has five subunits: alpha(3), beta(3), gamma(1), delta(1), epsilon(1). CF(0) has three main subunits: a, b and c.

The protein resides in the cell inner membrane. Its function is as follows. Produces ATP from ADP in the presence of a proton gradient across the membrane. This is ATP synthase epsilon chain from Pseudomonas putida (strain W619).